The chain runs to 1119 residues: GATOR2 complex protein MIOS (1119 aa).

The WD 1 repeat unit spans residues 3–43 (QSSTRKRLIQWSPHNKSSFIVGSNDLRLYNFKFKDKNEKKN). The interval 41–60 (KKNENNINNSNQYNQNNQQQ) is disordered. Residues 45-60 (NNINNSNQYNQNNQQQ) show a composition bias toward low complexity. WD repeat units follow at residues 127-169 (KTIS…ILTS), 183-227 (KHTR…STTL), 281-321 (TQSE…SSQS), 324-364 (AHQK…DPLI), and 368-409 (SNCK…EFSK). Residues 413-455 (LESTTLSTGGGGSGSNTSNNLNKRSTSNNNNSQDPINTISKPT) are disordered. Low complexity predominate over residues 427 to 444 (SNTSNNLNKRSTSNNNNS). The stretch at 459 to 499 (HSSDVVSSFSWHPTNECRMLTVSYSGVIDVVSLNENIPISW) is one WD 7 repeat. The segment at 601–669 (PSISTTTPGG…NNNNNNNNNN (69 aa)) is disordered. The C4-type zinc-finger motif lies at 973–1016 (AKCGFCQNSFAFESISASSIVGRNASSKPNFKAKVPFCPHCKQS). Cysteine 975, cysteine 978, cysteine 1010, cysteine 1013, cysteine 1023, cysteine 1085, cysteine 1088, histidine 1090, histidine 1093, histidine 1096, cysteine 1107, cysteine 1112, and cysteine 1116 together coordinate Zn(2+).

Belongs to the WD repeat mio family. As to quaternary structure, probably part of the GATOR complex.

It localises to the lysosome membrane. As a component of the GATOR complex may function in the amino acid-sensing branch of the TORC1 signaling pathway. This Dictyostelium discoideum (Social amoeba) protein is GATOR2 complex protein MIOS.